An 82-amino-acid chain; its full sequence is UPF0298 protein SPCG_0698 (82 aa).

Belongs to the UPF0298 family.

The protein resides in the cytoplasm. This Streptococcus pneumoniae (strain CGSP14) protein is UPF0298 protein SPCG_0698.